The following is a 303-amino-acid chain: Ribosomal protein L11 methyltransferase (303 aa).

Threonine 144, glycine 165, aspartate 187, and asparagine 235 together coordinate S-adenosyl-L-methionine.

The protein belongs to the methyltransferase superfamily. PrmA family.

Its subcellular location is the cytoplasm. It catalyses the reaction L-lysyl-[protein] + 3 S-adenosyl-L-methionine = N(6),N(6),N(6)-trimethyl-L-lysyl-[protein] + 3 S-adenosyl-L-homocysteine + 3 H(+). In terms of biological role, methylates ribosomal protein L11. The sequence is that of Ribosomal protein L11 methyltransferase from Prochlorococcus marinus (strain AS9601).